A 1022-amino-acid chain; its full sequence is Collagen alpha-2(VI) chain (1022 aa).

A signal peptide spans 1 to 27; it reads MSRRTAEMFQQAFLSTLLCVALVPLHA. The tract at residues 28-255 is nonhelical region; that stretch reads QFDDEPVTSC…CYKMTCLEIA (228 aa). A VWFA 1 domain is found at 44–168; it reads PISVYFVIDT…VITDGHVTGS (125 aa). N-linked (GlcNAc...) asparagine glycans are attached at residues N141 and N215. Residues 256–590 form a triple-helical region region; sequence GPAGPKGYRG…PGPPGDPGLT (335 aa). A disordered region spans residues 263–587; that stretch reads YRGQKGAKGN…EGTPGPPGDP (325 aa). Residues 287-299 are compositionally biased toward low complexity; sequence DPGIEGPIGYPGP. The segment covering 306 to 318 has biased composition (basic and acidic residues); that stretch reads KGEKGEIGSDGRR. N327 carries N-linked (GlcNAc...) asparagine glycosylation. 2 short sequence motifs (cell attachment site) span residues 348 to 350 and 366 to 368; these read RGD. A compositionally biased stretch (basic and acidic residues) spans 363 to 377; sequence QGERGDEGMKGDPGR. The segment covering 389 to 399 has biased composition (low complexity); it reads EKGSPGIPGNP. 5 short sequence motifs (cell attachment site) span residues 426–428, 444–446, 465–467, 489–491, and 498–500; these read RGD. The segment at 514–519 is interruption in collagenous region; it reads GFSYPG. A compositionally biased stretch (gly residues) spans 534 to 543; the sequence is GPKGGRGELG. The interval 591 to 1022 is nonhelical region; sequence DCDVMTYVRE…FFDRFIRWIC (432 aa). VWFA domains lie at 613-738 and 833-957; these read ALDI…YDPR and DIVF…ITGS. 2 N-linked (GlcNAc...) asparagine glycosylation sites follow: N630 and N897.

This sequence belongs to the type VI collagen family. As to quaternary structure, trimers composed of three different chains: alpha 1(VI), alpha 2(VI), and alpha 3(VI). Post-translationally, prolines at the third position of the tripeptide repeating unit (G-X-Y) are hydroxylated in some or all of the chains.

Its subcellular location is the secreted. The protein localises to the extracellular space. The protein resides in the extracellular matrix. Collagen VI acts as a cell-binding protein. This chain is Collagen alpha-2(VI) chain (COL6A2), found in Gallus gallus (Chicken).